A 536-amino-acid chain; its full sequence is Phosphoenolpyruvate carboxykinase (ATP) (536 aa).

Substrate contacts are provided by Arg-61, Tyr-195, and Lys-201. ATP is bound by residues Lys-201, His-220, and 236-244; that span reads GLSGTGKTT. 2 residues coordinate Mn(2+): Lys-201 and His-220. Mn(2+) is bound at residue Asp-257. Glu-285, Arg-322, and Thr-447 together coordinate ATP. Arg-322 provides a ligand contact to substrate.

This sequence belongs to the phosphoenolpyruvate carboxykinase (ATP) family. The cofactor is Mn(2+).

It is found in the cytoplasm. It catalyses the reaction oxaloacetate + ATP = phosphoenolpyruvate + ADP + CO2. It participates in carbohydrate biosynthesis; gluconeogenesis. Functionally, involved in the gluconeogenesis. Catalyzes the conversion of oxaloacetate (OAA) to phosphoenolpyruvate (PEP) through direct phosphoryl transfer between the nucleoside triphosphate and OAA. This chain is Phosphoenolpyruvate carboxykinase (ATP), found in Brucella anthropi (strain ATCC 49188 / DSM 6882 / CCUG 24695 / JCM 21032 / LMG 3331 / NBRC 15819 / NCTC 12168 / Alc 37) (Ochrobactrum anthropi).